Here is a 1673-residue protein sequence, read N- to C-terminus: Protein-methionine sulfoxide oxidase mical3b (1673 aa).

The tract at residues 2 to 492 (WDGQSEMCQA…RHLIDTGEGP (491 aa)) is monooxygenase domain. FAD-binding positions include cysteine 96, 96 to 124 (CGLR…SRNN), glutamate 115, arginine 117, arginine 122, asparagine 124, and aspartate 396. Residues 512–618 (MARYSKLLSW…YLSQLHELLK (107 aa)) form the Calponin-homology (CH) domain. A disordered region spans residues 647–714 (SKLGQSLSRK…PKASEGHSKV (68 aa)). The segment covering 661 to 671 (DKKEKEADSVG) has biased composition (basic and acidic residues). One can recognise an LIM zinc-binding domain in the interval 791–853 (DVCYFCGRRV…KHHFSFRLAS (63 aa)). Low complexity predominate over residues 882–892 (LSSLGSVGTAT). Disordered stretches follow at residues 882 to 901 (LSSL…SSTH), 918 to 938 (RIEL…LQEV), 951 to 1100 (SLQE…KRSE), 1159 to 1188 (QSAR…TDGD), and 1357 to 1393 (GPDA…RETG). The segment covering 973-992 (LVWKKGEELHARTNGERKLD) has biased composition (basic and acidic residues). 2 stretches are compositionally biased toward acidic residues: residues 993–1002 (LEEELKEEEG) and 1010–1041 (EGEE…DPDI). Low complexity predominate over residues 1081–1094 (SDLTPDPSTTPESS). Residues 1159–1182 (QSARICDSSTQTHSVTDLQETSPL) are compositionally biased toward polar residues. Coiled-coil stretches lie at residues 1475–1531 (EEEL…AVEK) and 1573–1638 (QEKN…VEQR). Positions 1495 to 1661 (KQEELRRLHR…EKEEDSDLEA (167 aa)) constitute a bMERB domain.

The protein belongs to the Mical family. FAD serves as cofactor.

It localises to the cytoplasm. It is found in the cytoskeleton. The protein resides in the nucleus. It catalyses the reaction L-methionyl-[F-actin] + NADPH + O2 + H(+) = L-methionyl-(R)-S-oxide-[F-actin] + NADP(+) + H2O. Functionally, monooxygenase that promotes depolymerization of F-actin by mediating oxidation of specific methionine residues on actin. Acts by modifying actin subunits through the addition of oxygen to form methionine-sulfoxide, leading to promote actin filament severing and prevent repolymerization. Involved in exocytic vesicles tethering and fusion: the monooxygenase activity is required for this process. In Danio rerio (Zebrafish), this protein is Protein-methionine sulfoxide oxidase mical3b (mical3b).